The sequence spans 802 residues: Osmosensitive cation channel TMEM63C (802 aa).

Topologically, residues 1-35 are extracellular; the sequence is MTASPESMGQKFRNMTANECFQSRSTVLQGQPFGG. A helical membrane pass occupies residues 36-60; sequence IPTVLLLNIILWVCVVLVYSFLRKA. The Cytoplasmic portion of the chain corresponds to 61-124; sequence AWDYGRLALL…RDRDLINKCG (64 aa). Residues serine 75 and serine 78 each carry the phosphoserine modification. The chain crosses the membrane as a helical span at residues 125 to 157; it reads EDARIYIMFQYHLIIFVLILCIPSLGIILPVNY. At 158–180 the chain is on the extracellular side; it reads IGSALDWSSHFGRTTIVNVSTES. Residues 181–205 traverse the membrane as a helical segment; it reads QFLWLHSIFAFMYFLTNFAFMGHHC. The Cytoplasmic segment spans residues 206–401; the sequence is LGFVPKKNLH…IIWKHLSIRR (196 aa). The helical transmembrane segment at 402–431 threads the bilayer; it reads FSWWARFIAINTSLFFLFFFLTTPAIIINT. The Extracellular portion of the chain corresponds to 432-446; it reads IDMYNVTRPIEKLQS. Residues 447 to 476 form a helical membrane-spanning segment; sequence PVVTQFFPSVLLWAFTVIMPLLVYFSAFLE. Residues 477–480 lie on the Cytoplasmic side of the membrane; sequence AHWT. A helical membrane pass occupies residues 481-517; the sequence is RSNQNLIIMYKCYIFLVFMVVILPSMGLTSLDVFLRW. Over 518–540 the chain is Extracellular; it reads LFDIYYLEHATIRFQCVFLPDNG. The helical transmembrane segment at 541–573 threads the bilayer; it reads AFFINYVITSALFGTGMELMRLGSLCTYCTRLF. Over 574–593 the chain is Cytoplasmic; it reads LSRSEPERVHIRKNLAMDFQ. A helical membrane pass occupies residues 594-612; the sequence is FGREYAWMLNVFSVVMAYS. The Extracellular portion of the chain corresponds to 613-615; sequence ITC. The helical transmembrane segment at 616–640 threads the bilayer; that stretch reads PIIVPFGLLYLCMKHITDRYNMYYS. At 641–647 the chain is on the cytoplasmic side; it reads YAPTKLN. A helical membrane pass occupies residues 648–676; it reads AQIHMAAVYQAIFAPLLGLFWMLFFSILR. The Extracellular portion of the chain corresponds to 677–681; it reads VGSLH. Residues 682-702 traverse the membrane as a helical segment; the sequence is SITLFSLSSIIISVIIAFSGV. The Cytoplasmic segment spans residues 703 to 802; the sequence is FLGKFRIAQQ…EGLELEGQSH (100 aa). The disordered stretch occupies residues 753 to 785; it reads TPASSPARHTYGTMNSQPEEGEEESGLRGFARE.

It belongs to the CSC1 (TC 1.A.17) family. As to quaternary structure, monomer. Expressed in podocytes of kidney glomeruli.

The protein localises to the endoplasmic reticulum membrane. Its subcellular location is the cell membrane. It catalyses the reaction Ca(2+)(in) = Ca(2+)(out). Functionally, acts as an osmosensitive cation channel preferentially activated upon hypotonic stress. In contrast to TMEM63B, does not show phospholipid scramblase activity. Enriched in mitochondria-ER contact sites where it may regulate the metabolite flux and organelles' morphologies in response to osmotic changes. In particular may regulate mitochondrial motility and function in motor neuron axons. Required for the functional integrity of the kidney glomerular filtration barrier. This chain is Osmosensitive cation channel TMEM63C (Tmem63c), found in Rattus norvegicus (Rat).